A 316-amino-acid chain; its full sequence is Transaldolase (316 aa).

Catalysis depends on Lys-125, which acts as the Schiff-base intermediate with substrate.

This sequence belongs to the transaldolase family. Type 1 subfamily. As to quaternary structure, homodimer.

Its subcellular location is the cytoplasm. The enzyme catalyses D-sedoheptulose 7-phosphate + D-glyceraldehyde 3-phosphate = D-erythrose 4-phosphate + beta-D-fructose 6-phosphate. The protein operates within carbohydrate degradation; pentose phosphate pathway; D-glyceraldehyde 3-phosphate and beta-D-fructose 6-phosphate from D-ribose 5-phosphate and D-xylulose 5-phosphate (non-oxidative stage): step 2/3. In terms of biological role, transaldolase is important for the balance of metabolites in the pentose-phosphate pathway. In Acidovorax sp. (strain JS42), this protein is Transaldolase.